The primary structure comprises 2430 residues: Protein TASOR 2 (2430 aa).

3 positions are modified to phosphoserine: S19, S219, and S384. Disordered stretches follow at residues 416 to 488 (LDRK…GETA) and 577 to 648 (RGTS…SQSS). At S685 the chain carries Phosphoserine. The segment at 704–727 (LLLQQKPPDDPVVKPKDRPPSARV) is disordered. Basic and acidic residues predominate over residues 710-723 (PPDDPVVKPKDRPP). 3 positions are modified to phosphoserine: S1025, S1087, and S1172. Residues 1331-1360 (LTESREVSSADNVSVYPSVSEEPVENKERK) form a disordered region. S1541 bears the Phosphoserine mark. The interval 1700-1727 (EAELHKETTGPGTAGPQSNTTSSLKGER) is disordered. Residues 1714 to 1723 (GPQSNTTSSL) are compositionally biased toward polar residues. A Phosphoserine modification is found at S1848. K2007 is covalently cross-linked (Glycyl lysine isopeptide (Lys-Gly) (interchain with G-Cter in SUMO2)). S2009, S2037, S2062, and S2066 each carry phosphoserine. The interval 2046 to 2069 (SDPRPQGQPRRGYTASSLDSSSSW) is disordered.

The protein belongs to the TASOR family.

The chain is Protein TASOR 2 from Homo sapiens (Human).